Reading from the N-terminus, the 374-residue chain is MRKFPLFSSSLSFLLLILFKENDIIVVMEKKKLRINMLSSSEKVAGQGVSGAYRELVRLLHRAAKDQLIVTENLPIEADVTHFHTIDFPYYLSTFQKKRSGRKIGYVHFLPATLEGSLKIPFFLKGIVKRYVFSFYNRMEHLVVVNPMFIEDLVAAGIPREKVTYIPNFVNKEKWHPLPQEEVVRLRTDLGLSDNQFIVVGAGQVQKRKGIDDFIRLAEELPQITFIWAGGFSFGGMTDGYEHYKTIMENPPKNLIFPGIVSPERMRELYALADLFLLPSYNELFPMTILEAASCEAPIMLRDLDLYKVILEGNYRATAGREEMKEAILEYQANPAVLKDLKEKAKNISREYSEEHLLQIWLDFYEKQAALGRK.

The protein belongs to the glycosyltransferase group 1 family. Glycosyltransferase 4 subfamily. The cofactor is Mg(2+).

The protein localises to the cell membrane. The catalysed reaction is a 1,2-diacyl-3-O-(alpha-D-glucopyranosyl)-sn-glycerol + UDP-alpha-D-galactose = a 1,2-diacyl-3-O-[alpha-D-galactopyranosyl-(1-&gt;2)-alpha-D-glucopyranosyl]-sn-glycerol + UDP + H(+). Its activity is regulated as follows. Activated by the negatively charged lipid phosphatidylglycerol (PG). Galactosyltransferase involved in the biosynthesis of the bilayer-forming membrane lipid alpha-galactosyl-glucosyldiacylglycerol which is involved in maintaining constant nonbilayer/bilayer conditions (curvature packing stress). Also involved in the beta-lactam resistance. Catalyzes the transfer of a galactosyl residue from UDP-Gal to alpha-glucosyl-DAG (1,2-diacyl-3-O-(alpha-D-glucopyranosyl)-sn-glycerol) acceptor to form the corresponding galactosyl-glycosyl-DAG product (3-O-alpha-(D-galactopyranosyl-alpha-(1-&gt;2)-D-glucopyranosyl)-1,2-diacyl-sn-glycerol). It can only use UDP-Gal as sugar donor and alpha-glucosyl-DAG is the preferred sugar acceptor. The protein is Alpha-galactosylglucosyldiacylglycerol synthase (cpoA) of Streptococcus pneumoniae (strain ATCC BAA-255 / R6).